The following is a 562-amino-acid chain: MDDNKRPLYLPFAGPAILEAPLINKGSAFTEEERIFFNLEGLLPHVIETIEEQASRAYDQYKNFGNDLDRHIYLRNIQDTNETLYYRLLQNHITEMMPIIYTPTVGLACERFSKNYRRNRGLFISYPNKDRIDDILNNSTRQKVKIIVVTDGERILGLGDQGIGGMGIPIGKLSLYTSCGGISPAYTLPITLDVGTDNPHLLEDPMYMGWRNQRIGGEEYAEFVEAFMEAVHRRWPDALIQFEDFAQKNAMPLLERYKDRYCCFNDDIQGTAAVTVGSLLAACQAADSKLSQQRIAFLGAGSAGCGIAEAIIAQMVSEGISDEQARQQVFMVDRWGLLQDNMPNLLPFQQNLAQQVAKVEGWNTESENISLLDVMHNGKPTVLIGVSGAPGLFSEEIIKAMHTHCERPIIFPLSNPTSRVEATPKDILHWTKGQALVATGSPFEPVVIEEQTYEIAQCNNSYIFPGIGLGVLASGAKRVSNEMLMASSRALAECSPLAKDGEGSLLPALEDIHSVSKHIAFAVGKVAIEQGHALPASDELLMQAIEDNFWTAEYRRYKRTSF.

The Proton donor role is filled by Tyr-101. Arg-154 contacts NAD(+). The Proton acceptor role is filled by Lys-172. Residues Glu-243, Asp-244, and Asp-267 each contribute to the a divalent metal cation site. NAD(+)-binding residues include Asp-267 and Asn-415.

It belongs to the malic enzymes family. Homotetramer. Mg(2+) is required as a cofactor. Requires Mn(2+) as cofactor.

The catalysed reaction is (S)-malate + NAD(+) = pyruvate + CO2 + NADH. It catalyses the reaction oxaloacetate + H(+) = pyruvate + CO2. The sequence is that of NAD-dependent malic enzyme from Shewanella loihica (strain ATCC BAA-1088 / PV-4).